The sequence spans 137 residues: Bacteriohemerythrin (137 aa).

Fe cation contacts are provided by H21, H53, E57, H72, H76, H112, and D117.

Belongs to the hemerythrin family. In terms of assembly, monomer.

In terms of biological role, oxygen-binding protein. May be involved in a storage mechanism or for delivery to oxygen-requiring enzymes. The oxygen-binding site contains two iron atoms. This is Bacteriohemerythrin from Ralstonia nicotianae (strain ATCC BAA-1114 / GMI1000) (Ralstonia solanacearum).